A 552-amino-acid chain; its full sequence is Urocanate hydratase (552 aa).

NAD(+) contacts are provided by residues 49–50 (GG), glutamine 127, 173–175 (GMG), glutamate 193, arginine 198, 239–240 (NA), 260–264 (QTSAH), 270–271 (YI), and tyrosine 319. Cysteine 407 is an active-site residue. Residue glycine 489 coordinates NAD(+).

This sequence belongs to the urocanase family. It depends on NAD(+) as a cofactor.

It localises to the cytoplasm. It carries out the reaction 4-imidazolone-5-propanoate = trans-urocanate + H2O. It participates in amino-acid degradation; L-histidine degradation into L-glutamate; N-formimidoyl-L-glutamate from L-histidine: step 2/3. In terms of biological role, catalyzes the conversion of urocanate to 4-imidazolone-5-propionate. The polypeptide is Urocanate hydratase (Geobacillus sp. (strain WCH70)).